We begin with the raw amino-acid sequence, 205 residues long: Holliday junction branch migration complex subunit RuvA (205 aa).

Residues 1-64 (MIGKLKGILE…EEAIRLFGFV (64 aa)) form a domain I region. Residues 65 to 143 (AKAEQEWFCL…PFNDNALHFT (79 aa)) form a domain II region. The interval 144 to 149 (PQPHLE) is flexible linker. The segment at 150 to 205 (VTHQPTNDALSALVKLGFERDQAARALALAMNALEGETVSSALLIRHSLKLLSPST) is domain III.

This sequence belongs to the RuvA family. As to quaternary structure, homotetramer. Forms an RuvA(8)-RuvB(12)-Holliday junction (HJ) complex. HJ DNA is sandwiched between 2 RuvA tetramers; dsDNA enters through RuvA and exits via RuvB. An RuvB hexamer assembles on each DNA strand where it exits the tetramer. Each RuvB hexamer is contacted by two RuvA subunits (via domain III) on 2 adjacent RuvB subunits; this complex drives branch migration. In the full resolvosome a probable DNA-RuvA(4)-RuvB(12)-RuvC(2) complex forms which resolves the HJ.

The protein resides in the cytoplasm. The RuvA-RuvB-RuvC complex processes Holliday junction (HJ) DNA during genetic recombination and DNA repair, while the RuvA-RuvB complex plays an important role in the rescue of blocked DNA replication forks via replication fork reversal (RFR). RuvA specifically binds to HJ cruciform DNA, conferring on it an open structure. The RuvB hexamer acts as an ATP-dependent pump, pulling dsDNA into and through the RuvAB complex. HJ branch migration allows RuvC to scan DNA until it finds its consensus sequence, where it cleaves and resolves the cruciform DNA. This chain is Holliday junction branch migration complex subunit RuvA, found in Bartonella quintana (strain Toulouse) (Rochalimaea quintana).